We begin with the raw amino-acid sequence, 325 residues long: RepFIB replication protein A (325 aa).

The segment at 279-298 (APNDESKENPLPPSPAEKVS) is disordered.

The protein belongs to the initiator RepB protein family.

This protein is essential for plasmid replication; it is involved in copy control functions. In vitro, binds to the DNA repeat units, BCDD'D'', EFG and HIJ. The sequence is that of RepFIB replication protein A (repA) from Escherichia coli.